The chain runs to 355 residues: Guanine nucleotide-binding protein G(i) subunit alpha-2 (355 aa).

Gly-2 carries N-myristoyl glycine lipidation. Cys-3 carries S-palmitoyl cysteine lipidation. Residues 32 to 355 (REVKLLLLGA…KNNLKDCGLF (324 aa)) form the G-alpha domain. Positions 35–48 (KLLLLGAGESGKST) are G1 motif. Residues 40–47 (GAGESGKS), 176–182 (LRTRVKT), 201–205 (DVGGQ), 270–273 (NKKD), and Ala-327 each bind GTP. Ser-47 and Thr-182 together coordinate Mg(2+). Residues 174-182 (DVLRTRVKT) form a G2 motif region. Positions 197–206 (FKMFDVGGQR) are G3 motif. The segment at 266-273 (ILFLNKKD) is G4 motif. The G5 motif stretch occupies residues 325 to 330 (TCATDT).

It belongs to the G-alpha family. G(i/o/t/z) subfamily. In terms of assembly, g proteins are composed of 3 units; alpha, beta and gamma. The alpha chain contains the guanine nucleotide binding site. In this context, interacts with GNB2. Interacts with UNC5B. Interacts with GPSM1. Interacts with RGS12 and RGS14. Interacts (inactive GDP-bound form) with NUCB1 (via GBA motif); the interaction leads to activation of GNAI3. Interacts (inactive GDP-bound form) with CCDC88C/DAPLE (via GBA motif). Interacts (inactive GDP-bound form) with CCDC8A/GIV (via GBA motif).

It is found in the cytoplasm. The protein localises to the cell membrane. It localises to the cytoskeleton. The protein resides in the microtubule organizing center. Its subcellular location is the centrosome. It is found in the membrane. In terms of biological role, guanine nucleotide-binding proteins (G proteins) are involved as modulators or transducers in various transmembrane signaling systems. The G(i) proteins are involved in hormonal regulation of adenylate cyclase: they inhibit the cyclase in response to beta-adrenergic stimuli. May play a role in cell division. The polypeptide is Guanine nucleotide-binding protein G(i) subunit alpha-2 (Gnai2) (Rattus norvegicus (Rat)).